We begin with the raw amino-acid sequence, 272 residues long: Shikimate dehydrogenase (NADP(+)) (272 aa).

Residues 14 to 16 (SKS) and Thr61 each bind shikimate. Catalysis depends on Lys65, which acts as the Proton acceptor. An NADP(+)-binding site is contributed by Glu77. 2 residues coordinate shikimate: Asn86 and Asp102. NADP(+) contacts are provided by residues 126–130 (GAGGA), 149–154 (NRTVSR), and Met213. Shikimate is bound at residue Tyr215. NADP(+) is bound at residue Gly237.

The protein belongs to the shikimate dehydrogenase family. In terms of assembly, homodimer.

It catalyses the reaction shikimate + NADP(+) = 3-dehydroshikimate + NADPH + H(+). It functions in the pathway metabolic intermediate biosynthesis; chorismate biosynthesis; chorismate from D-erythrose 4-phosphate and phosphoenolpyruvate: step 4/7. Involved in the biosynthesis of the chorismate, which leads to the biosynthesis of aromatic amino acids. Catalyzes the reversible NADPH linked reduction of 3-dehydroshikimate (DHSA) to yield shikimate (SA). This chain is Shikimate dehydrogenase (NADP(+)), found in Shigella sonnei (strain Ss046).